Reading from the N-terminus, the 389-residue chain is uncharacterized protein (389 aa).

The next 4 membrane-spanning stretches (helical) occupy residues 31 to 51, 96 to 116, 123 to 143, and 152 to 172; these read LFIV…VEVI, IMQI…ALLV, APLV…MFPP, and MIDA…LPSS.

The protein to M.tuberculosis Rv2571c.

The protein localises to the cell membrane. This is an uncharacterized protein from Corynebacterium glutamicum (strain ATCC 13032 / DSM 20300 / JCM 1318 / BCRC 11384 / CCUG 27702 / LMG 3730 / NBRC 12168 / NCIMB 10025 / NRRL B-2784 / 534).